The chain runs to 275 residues: Ammonia transport outward protein 3 (275 aa).

At 1 to 84 (MTSSASSPQD…NCAKYTPHQF (84 aa)) the chain is on the extracellular side. Residue Ser-4 is modified to Phosphoserine. Residues 85–105 (ANPVPLGLASFSLSCLVLSLI) traverse the membrane as a helical segment. The Cytoplasmic portion of the chain corresponds to 106–120 (NANVRGVTDGKWALS). Residues 121-141 (LFMFFGGAIELFAGLLCFVIG) form a helical membrane-spanning segment. Residues 142–181 (DTYAMTVFSSFGGFWICYGYGLTDTDNLVSGYTDPTMLNN) lie on the Extracellular side of the membrane. A helical membrane pass occupies residues 182 to 202 (VIGFFLAGWTVFTFLMLMCTL). Over 203 to 207 (KSTWG) the chain is Cytoplasmic. Residues 208-228 (LFLLLTFLDLTFLLLCIGTFI) traverse the membrane as a helical segment. Topologically, residues 229 to 236 (DNNNLKMA) are extracellular. Residues 237–257 (GGYFGILSSCCGWYSLYCSVV) traverse the membrane as a helical segment. The Cytoplasmic segment spans residues 258–275 (SPSNSYLAFRAHTMPNAP).

The protein belongs to the acetate uptake transporter (AceTr) (TC 2.A.96) family.

The protein resides in the cell membrane. Functionally, transporter protein required for ammonia export. Induced in rho(0) cells, probably to eliminate the excess ammonia that arises because of a potential defect in ammonia assimilation in those cells. In Saccharomyces cerevisiae (strain ATCC 204508 / S288c) (Baker's yeast), this protein is Ammonia transport outward protein 3 (ATO3).